The sequence spans 664 residues: Glycine--tRNA ligase beta subunit (664 aa).

Belongs to the class-II aminoacyl-tRNA synthetase family. In terms of assembly, tetramer of two alpha and two beta subunits.

The protein resides in the cytoplasm. The catalysed reaction is tRNA(Gly) + glycine + ATP = glycyl-tRNA(Gly) + AMP + diphosphate. In Rickettsia conorii (strain ATCC VR-613 / Malish 7), this protein is Glycine--tRNA ligase beta subunit.